Here is a 539-residue protein sequence, read N- to C-terminus: Acid-sensing ion channel 4-A (539 aa).

The Cytoplasmic portion of the chain corresponds to 1-68 (MPIEFVCKIK…SGRLGVRQTL (68 aa)). A helical membrane pass occupies residues 69 to 89 (WALAFLVSLALFLYQAAKCAI). The Extracellular segment spans residues 90 to 432 (SYLEHPHVTA…EQKKAYDVAG (343 aa)). 2 disulfide bridges follow: C116/C200 and C178/C185. N-linked (GlcNAc...) asparagine glycans are attached at residues N136, N165, N179, N184, N206, and N241. Cystine bridges form between C294-C369, C313-C365, C317-C363, C326-C347, and C328-C340. N-linked (GlcNAc...) asparagine glycosylation occurs at N370. Residues 433-453 (LLGDIGGQMGLFIGASVLTIL) form a helical membrane-spanning segment. A GAS motif; ion selectivity filter motif is present at residues 446 to 448 (GAS). Residues 454–539 (EILDYVYEVI…HHRVSEDFAC (86 aa)) are Cytoplasmic-facing. The interval 474–494 (QRDDKKQTQQQQQASTVATVN) is disordered.

It belongs to the amiloride-sensitive sodium channel (TC 1.A.6) family. ASIC4 subfamily. In terms of assembly, homotrimer. Heterotrimer; with other ASIC proteins producing functional channels. Expressed in central nervous system.

The protein resides in the cell membrane. It carries out the reaction Na(+)(in) = Na(+)(out). With respect to regulation, inhibited by the diuretic drug amiloride. In terms of biological role, could form pH-gated trimeric sodium channels and function as a postsynaptic excitatory receptors in the nervous system. In Danio rerio (Zebrafish), this protein is Acid-sensing ion channel 4-A.